The following is a 377-amino-acid chain: Probable O-methyltransferase 3 (377 aa).

D241 is a binding site for S-adenosyl-L-methionine. The active-site Proton acceptor is H279.

The protein belongs to the class I-like SAM-binding methyltransferase superfamily. Cation-independent O-methyltransferase family. As to expression, highly expressed in lupulin glands. Detected in early-, mid- and late-stage cones.

The protein is Probable O-methyltransferase 3 of Humulus lupulus (European hop).